Here is a 98-residue protein sequence, read N- to C-terminus: MEIKVTEIRENKLLGRKEIYFDVLHEGEPTPSREAVKGKLVAMLDLDPNTTVIQYIRSYFGSNVSKGYAKAYETRERMLYIEPEYILVRDGLVQKQEE.

This sequence belongs to the eukaryotic ribosomal protein eS24 family. Part of the 30S ribosomal subunit.

The chain is Small ribosomal subunit protein eS24 from Thermococcus kodakarensis (strain ATCC BAA-918 / JCM 12380 / KOD1) (Pyrococcus kodakaraensis (strain KOD1)).